A 76-amino-acid chain; its full sequence is DNA-directed RNA polymerase subunit epsilon (76 aa).

It belongs to the RNA polymerase subunit epsilon family. As to quaternary structure, RNAP is composed of a core of 2 alpha, a beta and a beta' subunit. The core is associated with a delta subunit, and at least one of epsilon or omega. When a sigma factor is associated with the core the holoenzyme is formed, which can initiate transcription.

It catalyses the reaction RNA(n) + a ribonucleoside 5'-triphosphate = RNA(n+1) + diphosphate. Its function is as follows. A non-essential component of RNA polymerase (RNAP). The sequence is that of DNA-directed RNA polymerase subunit epsilon from Streptococcus thermophilus (strain CNRZ 1066).